The chain runs to 953 residues: Factor arrest protein 11 (953 aa).

Residues Ser18 and Ser81 each carry the phosphoserine modification. The tract at residues 104-160 (DIQQDSSDENDNFKFSDDGVNKDRNNEKDNNTDNAVEFQDDAEEAEEENEDESFANV) is disordered. Basic and acidic residues predominate over residues 114–134 (DNFKFSDDGVNKDRNNEKDNN). A compositionally biased stretch (acidic residues) spans 141–160 (FQDDAEEAEEENEDESFANV). A phosphoserine mark is found at Ser524, Ser527, and Ser528.

This sequence belongs to the FAR11 family. Component of a complex at least composed of FAR3, FAR7, FAR8, FAR10, FAR11 and VPS64.

In terms of biological role, participates in the control of the reentry into the cell cycle following pheromone treatment. The protein is Factor arrest protein 11 (FAR11) of Saccharomyces cerevisiae (strain ATCC 204508 / S288c) (Baker's yeast).